Consider the following 153-residue polypeptide: MASPDPPATSYAPSDVPSGVALFLTIPFAFFLPELIFGFLVWTMVAATHIVYPLLQGWVMYVSLTSFLISLMFLLSYLFGFYKRFESWRVLDSLYHGTTGILYMSAAVLQVHATIVSEKLLDPRIYYINSAASFFAFIATLLYILHAFSIYYH.

A run of 4 helical transmembrane segments spans residues 22–42 (LFLT…FLVW), 59–79 (VMYV…SYLF), 97–117 (GTTG…TIVS), and 131–151 (AASF…FSIY). Positions 22 to 153 (LFLTIPFAFF…ILHAFSIYYH (132 aa)) constitute an MARVEL domain.

The protein belongs to the MAL family.

It localises to the membrane. The chain is MAL-like protein (MALL) from Homo sapiens (Human).